The primary structure comprises 213 residues: EEF1A lysine methyltransferase 1 (213 aa).

This sequence belongs to the class I-like SAM-binding methyltransferase superfamily. EFM5 family.

Its subcellular location is the cytoplasm. The catalysed reaction is L-lysyl-[protein] + 3 S-adenosyl-L-methionine = N(6),N(6),N(6)-trimethyl-L-lysyl-[protein] + 3 S-adenosyl-L-homocysteine + 3 H(+). Protein-lysine methyltransferase that selectively catalyzes the trimethylation of EEF1A at 'Lys-79'. The chain is EEF1A lysine methyltransferase 1 from Gallus gallus (Chicken).